Consider the following 94-residue polypeptide: Co-chaperonin GroES (94 aa).

Belongs to the GroES chaperonin family. In terms of assembly, heptamer of 7 subunits arranged in a ring. Interacts with the chaperonin GroEL.

The protein resides in the cytoplasm. In terms of biological role, together with the chaperonin GroEL, plays an essential role in assisting protein folding. The GroEL-GroES system forms a nano-cage that allows encapsulation of the non-native substrate proteins and provides a physical environment optimized to promote and accelerate protein folding. GroES binds to the apical surface of the GroEL ring, thereby capping the opening of the GroEL channel. This Lactiplantibacillus plantarum (strain ATCC BAA-793 / NCIMB 8826 / WCFS1) (Lactobacillus plantarum) protein is Co-chaperonin GroES.